We begin with the raw amino-acid sequence, 239 residues long: Uridylate kinase (239 aa).

ATP is bound at residue 10-13 (KLSG). Positions 18-23 (GEDGYG) are involved in allosteric activation by GTP. Gly-52 contributes to the UMP binding site. 2 residues coordinate ATP: Gly-53 and Arg-57. UMP is bound by residues Asp-72 and 133 to 140 (TGNPYFTT). 3 residues coordinate ATP: Thr-160, Tyr-166, and Asp-169.

It belongs to the UMP kinase family. As to quaternary structure, homohexamer.

The protein localises to the cytoplasm. The enzyme catalyses UMP + ATP = UDP + ADP. Its pathway is pyrimidine metabolism; CTP biosynthesis via de novo pathway; UDP from UMP (UMPK route): step 1/1. Its activity is regulated as follows. Allosterically activated by GTP. Inhibited by UTP. Catalyzes the reversible phosphorylation of UMP to UDP. This chain is Uridylate kinase, found in Chlorobium chlorochromatii (strain CaD3).